The primary structure comprises 113 residues: UPF0122 protein PEPE_0845 (113 aa).

It belongs to the UPF0122 family.

In terms of biological role, might take part in the signal recognition particle (SRP) pathway. This is inferred from the conservation of its genetic proximity to ftsY/ffh. May be a regulatory protein. This is UPF0122 protein PEPE_0845 from Pediococcus pentosaceus (strain ATCC 25745 / CCUG 21536 / LMG 10740 / 183-1w).